The chain runs to 236 residues: 1-(5-phosphoribosyl)-5-[(5-phosphoribosylamino)methylideneamino] imidazole-4-carboxamide isomerase (236 aa).

Asp-8 serves as the catalytic Proton acceptor. Residue Asp-129 is the Proton donor of the active site.

It belongs to the HisA/HisF family.

It localises to the cytoplasm. The enzyme catalyses 1-(5-phospho-beta-D-ribosyl)-5-[(5-phospho-beta-D-ribosylamino)methylideneamino]imidazole-4-carboxamide = 5-[(5-phospho-1-deoxy-D-ribulos-1-ylimino)methylamino]-1-(5-phospho-beta-D-ribosyl)imidazole-4-carboxamide. It functions in the pathway amino-acid biosynthesis; L-histidine biosynthesis; L-histidine from 5-phospho-alpha-D-ribose 1-diphosphate: step 4/9. This chain is 1-(5-phosphoribosyl)-5-[(5-phosphoribosylamino)methylideneamino] imidazole-4-carboxamide isomerase, found in Methanocorpusculum labreanum (strain ATCC 43576 / DSM 4855 / Z).